Consider the following 678-residue polypeptide: Translation factor GUF1 homolog, chloroplastic (678 aa).

The transit peptide at 1-43 (MASILLSLNTHTLLPLHTRTRTTKTTLKILRFSHKLPPSSPFY) directs the protein to the chloroplast. One can recognise a tr-type G domain in the interval 81-262 (KNIRNFCIIA…AIVERVPPPR (182 aa)). Residues 90–97 (AHIDHGKS), 155–159 (DTPGH), and 209–212 (NKID) each bind GTP.

It belongs to the TRAFAC class translation factor GTPase superfamily. Classic translation factor GTPase family. LepA subfamily.

Its subcellular location is the plastid. It is found in the chloroplast. The enzyme catalyses GTP + H2O = GDP + phosphate + H(+). Functionally, promotes chloroplast protein synthesis. May act as a fidelity factor of the translation reaction, by catalyzing a one-codon backward translocation of tRNAs on improperly translocated ribosomes. The chain is Translation factor GUF1 homolog, chloroplastic from Populus trichocarpa (Western balsam poplar).